The sequence spans 315 residues: Porphobilinogen deaminase (315 aa).

Cys238 bears the S-(dipyrrolylmethanemethyl)cysteine mark.

Belongs to the HMBS family. Monomer. Requires dipyrromethane as cofactor.

The catalysed reaction is 4 porphobilinogen + H2O = hydroxymethylbilane + 4 NH4(+). Its pathway is porphyrin-containing compound metabolism; protoporphyrin-IX biosynthesis; coproporphyrinogen-III from 5-aminolevulinate: step 2/4. Functionally, tetrapolymerization of the monopyrrole PBG into the hydroxymethylbilane pre-uroporphyrinogen in several discrete steps. The sequence is that of Porphobilinogen deaminase from Albidiferax ferrireducens (strain ATCC BAA-621 / DSM 15236 / T118) (Rhodoferax ferrireducens).